Reading from the N-terminus, the 1189-residue chain is Nucleolar protein NET1 (1189 aa).

2 positions are modified to phosphoserine: Ser60 and Ser166. Disordered regions lie at residues 160–260 (SKLN…ISSG) and 345–1189 (TAQD…FKKK). Low complexity predominate over residues 166-180 (SPQSVQPQQQIPSSS). Positions 200–210 (IRSATNGSMRV) are enriched in polar residues. Phosphoserine is present on residues Ser231 and Ser252. Positions 244–253 (LPPPTQPQSP) are enriched in pro residues. Residues 368–381 (PEPRISEIEKELKE) show a composition bias toward basic and acidic residues. A compositionally biased stretch (low complexity) spans 391–407 (PAKAAKIPMKKPYLENG). Polar residues predominate over residues 432 to 450 (ASLQRSQSSIADNNGSPVK). Ser437, Ser439, Ser447, and Ser452 each carry phosphoserine. Positions 470–486 (ASNTSITKSSNGESWGK) are enriched in polar residues. Ser497 is modified (phosphoserine). The span at 526 to 543 (NQVREKEDTNDKLLEKEI) shows a compositional bias: basic and acidic residues. Acidic residues predominate over residues 590–601 (IEDDGNDNDEVD). Over residues 641–657 (SRTSGNSKNSKPYTTVL) the composition is skewed to polar residues. The span at 659–668 (KDIDNSKPDP) shows a compositional bias: basic and acidic residues. Thr676 bears the Phosphothreonine mark. Residues 682–691 (KRAAQLLAGA) are compositionally biased toward low complexity. The segment covering 692-702 (KKNEVPQKSTE) has biased composition (basic and acidic residues). Residues 710-725 (TDDESESGIETDFSSD) show a composition bias toward acidic residues. Residues 756–777 (KDSKIINKEVDEERNDKRDSQK) show a composition bias toward basic and acidic residues. Positions 778–792 (KSAVSESSVTNSKIS) are enriched in polar residues. A compositionally biased stretch (basic and acidic residues) spans 806-815 (KQNEATKVET). Residues 822 to 833 (SSFPVVGGSPSV) are compositionally biased toward low complexity. The residue at position 830 (Ser830) is a Phosphoserine. Basic and acidic residues-rich tracts occupy residues 884–897 (DLNK…EPEK), 905–919 (ANDK…DSKS), and 945–954 (ANDKLKDLKA). Over residues 969–999 (SNEKNNSSANDDDSSSSGSSTEDESSSSSSS) the composition is skewed to low complexity. The span at 1023–1039 (RSSSKIEAPSPSVNKKI) shows a compositional bias: polar residues. Thr1042 is subject to Phosphothreonine. Positions 1055-1070 (SSPPSVKSKTTSNPSS) are enriched in low complexity. Ser1056 and Ser1059 each carry phosphoserine. Residues 1095-1109 (PDVKEKTSKSNEKSQ) show a composition bias toward basic and acidic residues. Low complexity-rich tracts occupy residues 1123 to 1137 (DSDS…SDSS) and 1158 to 1169 (SFISAKSASAAL).

The protein to yeast YKR010c. In terms of assembly, component of the RENT complex which is composed of at least NET1, CDC14 and SIR2. Interacts with NSI1. Post-translationally, phosphorylated by CDC5.

The protein resides in the nucleus. The protein localises to the nucleolus. Its function is as follows. Has a role in chromosome maintenance and is involved in mitotic exit. Inhibits the action of CDC14 by sequestering it in the nucleolus. Also binds to RNA polymerase I and stimulates rRNA synthesis. Influences RDNA chromatin by tethering SIR2 to rDNA in the nucleolus. This Saccharomyces cerevisiae (strain ATCC 204508 / S288c) (Baker's yeast) protein is Nucleolar protein NET1 (NET1).